The chain runs to 371 residues: Large ribosomal subunit protein bL27m (371 aa).

Residues 1–27 (MWNPILLDTSSFSFQKHVSGVFLQVRN) constitute a mitochondrion transit peptide.

The protein belongs to the bacterial ribosomal protein bL27 family. As to quaternary structure, component of the mitochondrial large ribosomal subunit (mt-LSU). Mature yeast 74S mitochondrial ribosomes consist of a small (37S) and a large (54S) subunit. The 37S small subunit contains a 15S ribosomal RNA (15S mt-rRNA) and 34 different proteins. The 54S large subunit contains a 21S rRNA (21S mt-rRNA) and 46 different proteins.

It localises to the mitochondrion. Functionally, component of the mitochondrial ribosome (mitoribosome), a dedicated translation machinery responsible for the synthesis of mitochondrial genome-encoded proteins, including at least some of the essential transmembrane subunits of the mitochondrial respiratory chain. The mitoribosomes are attached to the mitochondrial inner membrane and translation products are cotranslationally integrated into the membrane. This Saccharomyces cerevisiae (strain ATCC 204508 / S288c) (Baker's yeast) protein is Large ribosomal subunit protein bL27m (MRP7).